We begin with the raw amino-acid sequence, 243 residues long: MNNTSKLLNLSNVSYYIGQQRLLSNINIDIAVNETVSVIGPNGAGKSTLVKLILGLIVPTSGQVTPSEPLQIGYVPQRFSVPPILPLRVSDLLAQACKKRLTAEQRQFIFDKLSLTHLLSRQMLHLSGGETQRVLLARALLDKPNLLILDEPMQGLDPETEVWLYQFIDELPEFLRCAMLVVSHDLHWVMKGSRRVICLNKHICCEGQPSELAISSEFQKLFGHHYEQPYVHQPHACEHHAPS.

The ABC transporter domain maps to 8-225; that stretch reads LNLSNVSYYI…SEFQKLFGHH (218 aa). Position 40-47 (40-47) interacts with ATP; it reads GPNGAGKS.

It belongs to the ABC transporter superfamily. Zinc importer (TC 3.A.1.15.5) family. In terms of assembly, the complex is composed of two ATP-binding proteins (ZnuC), two transmembrane proteins (ZnuB) and a solute-binding protein (ZnuA).

It localises to the cell inner membrane. It catalyses the reaction Zn(2+)(out) + ATP(in) + H2O(in) = Zn(2+)(in) + ADP(in) + phosphate(in) + H(+)(in). Its function is as follows. Part of the ABC transporter complex ZnuABC involved in zinc import. Responsible for energy coupling to the transport system. This chain is Zinc import ATP-binding protein ZnuC, found in Psychrobacter cryohalolentis (strain ATCC BAA-1226 / DSM 17306 / VKM B-2378 / K5).